A 60-amino-acid polypeptide reads, in one-letter code: Large ribosomal subunit protein uL30 (60 aa).

Belongs to the universal ribosomal protein uL30 family. As to quaternary structure, part of the 50S ribosomal subunit.

This Albidiferax ferrireducens (strain ATCC BAA-621 / DSM 15236 / T118) (Rhodoferax ferrireducens) protein is Large ribosomal subunit protein uL30.